A 349-amino-acid chain; its full sequence is Fructose-1,6-bisphosphatase class 1 (349 aa).

4 residues coordinate Mg(2+): Glu-113, Asp-135, Ile-137, and Asp-138. Residues 138–141 (DGSS), Asn-230, Tyr-258, and Lys-288 each bind substrate. Glu-294 contributes to the Mg(2+) binding site.

This sequence belongs to the FBPase class 1 family. In terms of assembly, homotetramer. The cofactor is Mg(2+).

It localises to the cytoplasm. The enzyme catalyses beta-D-fructose 1,6-bisphosphate + H2O = beta-D-fructose 6-phosphate + phosphate. It functions in the pathway carbohydrate biosynthesis; Calvin cycle. This chain is Fructose-1,6-bisphosphatase class 1, found in Trichormus variabilis (strain ATCC 29413 / PCC 7937) (Anabaena variabilis).